The chain runs to 5085 residues: Linear gramicidin synthase subunit D (5085 aa).

Carrier domains follow at residues 962-1037, 2023-2097, 3544-3619, and 4601-4676; these read APRT…AAAG, SPST…EEKA, APRN…ELLT, and APQT…EEII. Serine 997, serine 2058, serine 3579, and serine 4636 each carry O-(pantetheine 4'-phosphoryl)serine.

The protein belongs to the ATP-dependent AMP-binding enzyme family. Large multienzyme complex composed of 4 subunits; LgrA, LgrB, LgrC and LgrD. Pantetheine 4'-phosphate serves as cofactor.

Its function is as follows. Activates the 13th to the 16th (Trp, D-Leu, Trp and Gly) amino acids in linear gramicidin and catalyzes the formation of the peptide bond between them. This enzyme is also responsible for the epimerization of the 14th (D-Leu) amino acid. It also catalyzes the NAD(P)H-dependent reduction of the C-terminal glycine residue of the N-formylated 16-mer peptide, that binds to the peptidyl carrier domain of the terminal module of this protein, to form a peptidyl-aldehyde intermediate that is released from the enzyme complex. The polypeptide is Linear gramicidin synthase subunit D (lgrD) (Brevibacillus parabrevis).